We begin with the raw amino-acid sequence, 356 residues long: S-adenosylmethionine:tRNA ribosyltransferase-isomerase (356 aa).

It belongs to the QueA family. As to quaternary structure, monomer.

The protein resides in the cytoplasm. It catalyses the reaction 7-aminomethyl-7-carbaguanosine(34) in tRNA + S-adenosyl-L-methionine = epoxyqueuosine(34) in tRNA + adenine + L-methionine + 2 H(+). Its pathway is tRNA modification; tRNA-queuosine biosynthesis. Its function is as follows. Transfers and isomerizes the ribose moiety from AdoMet to the 7-aminomethyl group of 7-deazaguanine (preQ1-tRNA) to give epoxyqueuosine (oQ-tRNA). The polypeptide is S-adenosylmethionine:tRNA ribosyltransferase-isomerase (Cronobacter sakazakii (strain ATCC BAA-894) (Enterobacter sakazakii)).